A 296-amino-acid chain; its full sequence is Probable AP endonuclease (296 aa).

A disulfide bridge links C16 with C20. Zn(2+)-binding residues include H78, H115, E142, H182, H218, D231, H233, and E271.

This sequence belongs to the AP endonuclease 2 family. Requires Zn(2+) as cofactor.

It is found in the host nucleus. Its subcellular location is the host cytoplasm. The protein localises to the virion. Endonuclease of the viral base excision repair system that catalyzes DNA cleavage reaction at the apurinic or apyrimidinic sites (AP sites). Cleaves phosphodiester bonds on the 5' side of AP sites. In addition to endonuclease activity, the AP endonuclease has a proofreading 3'-5' exonuclease activity that is considerably more efficient in the elimination of a mismatch than in that of a correctly paired base. Displays 3'-phosphatase and 3'-repair diesterase activities. The single nucleotide gaps generated by the AP endonuclease are filled by the viral repair DNA polymerase X and the DNA ligase. In Ornithodoros (relapsing fever ticks), this protein is Probable AP endonuclease.